The sequence spans 253 residues: Pro-opiomelanocortin A (253 aa).

The first 21 residues, 1 to 21 (MLCPAWLLAVAVVGVVRGVKG), serve as a signal peptide directing secretion. Gln22 carries the post-translational modification Pyrrolidone carboxylic acid. Intrachain disulfides connect Cys23–Cys45 and Cys29–Cys41. At Ser104 the chain carries N-acetylserine; in Corticotropin. Position 116 is a valine amide (Val116). The interval 228-253 (QKREQWGREEGEEKRALGERKYHFQG) is disordered. Gln252 carries the glutamine amide; partial modification.

This sequence belongs to the POMC family. Post-translationally, specific enzymatic cleavages at paired basic residues yield the different active peptides. Acetylation of beta-endorphin occurs in a tissue-specific manner. As to expression, C-terminal peptide 1 and C-terminal peptide 2 are detected in the anterior part of the nucleus lateralis tuberis of hypothalamus, in dorsal hypothalamus, thalamus, telencephalon, optic tectum and medulla oblongata (at protein level). Expressed in pituitary and hypothalamus of adult diploid animals, and hypothalamus of triploid and ovulated female trout.

It is found in the secreted. Its function is as follows. Stimulates the adrenal glands to release cortisol. In terms of biological role, melanocyte-stimulating hormone alpha: Anorexigenic peptide. Increases the pigmentation of skin by increasing melanin production in melanocytes. Functionally, melanocyte-stimulating hormone beta: Increases the pigmentation of skin by increasing melanin production in melanocytes. Beta-endorphin: Endogenous orexigenic opiate. Its function is as follows. Endogenous opiate. This is Pro-opiomelanocortin A (pomca) from Oncorhynchus mykiss (Rainbow trout).